A 403-amino-acid polypeptide reads, in one-letter code: Aminomethyltransferase, mitochondrial (403 aa).

The N-terminal 28 residues, Met-1–Ser-28, are a transit peptide targeting the mitochondrion. Substrate contacts are provided by Glu-232 and Arg-261. Lys-368 is subject to N6-succinyllysine. Tyr-399 provides a ligand contact to substrate.

Belongs to the GcvT family. As to quaternary structure, the glycine cleavage system is composed of four proteins: P, T, L and H.

Its subcellular location is the mitochondrion. The catalysed reaction is N(6)-[(R)-S(8)-aminomethyldihydrolipoyl]-L-lysyl-[protein] + (6S)-5,6,7,8-tetrahydrofolate = N(6)-[(R)-dihydrolipoyl]-L-lysyl-[protein] + (6R)-5,10-methylene-5,6,7,8-tetrahydrofolate + NH4(+). Its function is as follows. The glycine cleavage system catalyzes the degradation of glycine. This chain is Aminomethyltransferase, mitochondrial, found in Mus musculus (Mouse).